The primary structure comprises 201 residues: Imidazole glycerol phosphate synthase subunit HisH 1 (201 aa).

Positions 1–201 (MIALIDYKAG…LKLLENFIRL (201 aa)) constitute a Glutamine amidotransferase type-1 domain. Cysteine 80 functions as the Nucleophile in the catalytic mechanism. Catalysis depends on residues histidine 183 and glutamate 185.

Heterodimer of HisH and HisF.

It is found in the cytoplasm. It carries out the reaction 5-[(5-phospho-1-deoxy-D-ribulos-1-ylimino)methylamino]-1-(5-phospho-beta-D-ribosyl)imidazole-4-carboxamide + L-glutamine = D-erythro-1-(imidazol-4-yl)glycerol 3-phosphate + 5-amino-1-(5-phospho-beta-D-ribosyl)imidazole-4-carboxamide + L-glutamate + H(+). It catalyses the reaction L-glutamine + H2O = L-glutamate + NH4(+). Its pathway is amino-acid biosynthesis; L-histidine biosynthesis; L-histidine from 5-phospho-alpha-D-ribose 1-diphosphate: step 5/9. Its function is as follows. IGPS catalyzes the conversion of PRFAR and glutamine to IGP, AICAR and glutamate. The HisH subunit provides the glutamine amidotransferase activity that produces the ammonia necessary to HisF for the synthesis of IGP and AICAR. This chain is Imidazole glycerol phosphate synthase subunit HisH 1, found in Campylobacter jejuni (strain RM1221).